The sequence spans 94 residues: Co-chaperonin GroES (94 aa).

The protein belongs to the GroES chaperonin family. In terms of assembly, heptamer of 7 subunits arranged in a ring. Interacts with the chaperonin GroEL.

The protein localises to the cytoplasm. Together with the chaperonin GroEL, plays an essential role in assisting protein folding. The GroEL-GroES system forms a nano-cage that allows encapsulation of the non-native substrate proteins and provides a physical environment optimized to promote and accelerate protein folding. GroES binds to the apical surface of the GroEL ring, thereby capping the opening of the GroEL channel. The chain is Co-chaperonin GroES from Streptococcus pneumoniae (strain CGSP14).